We begin with the raw amino-acid sequence, 592 residues long: Arginine--tRNA ligase (592 aa).

The 'HIGH' region motif lies at V112 to H122.

It belongs to the class-I aminoacyl-tRNA synthetase family. In terms of assembly, monomer.

The protein localises to the cytoplasm. The enzyme catalyses tRNA(Arg) + L-arginine + ATP = L-arginyl-tRNA(Arg) + AMP + diphosphate. This Thermus thermophilus (strain ATCC 27634 / DSM 579 / HB8) protein is Arginine--tRNA ligase.